A 431-amino-acid chain; its full sequence is Serine--tRNA ligase (431 aa).

235–237 serves as a coordination point for L-serine; that stretch reads TAE. ATP is bound by residues 266–268 and Val282; that span reads RRE. An L-serine-binding site is contributed by Glu289. 353–356 is an ATP binding site; it reads EASS. Ser389 contacts L-serine.

The protein belongs to the class-II aminoacyl-tRNA synthetase family. Type-1 seryl-tRNA synthetase subfamily. Homodimer. The tRNA molecule binds across the dimer.

The protein localises to the cytoplasm. It catalyses the reaction tRNA(Ser) + L-serine + ATP = L-seryl-tRNA(Ser) + AMP + diphosphate + H(+). It carries out the reaction tRNA(Sec) + L-serine + ATP = L-seryl-tRNA(Sec) + AMP + diphosphate + H(+). It participates in aminoacyl-tRNA biosynthesis; selenocysteinyl-tRNA(Sec) biosynthesis; L-seryl-tRNA(Sec) from L-serine and tRNA(Sec): step 1/1. Functionally, catalyzes the attachment of serine to tRNA(Ser). Is also able to aminoacylate tRNA(Sec) with serine, to form the misacylated tRNA L-seryl-tRNA(Sec), which will be further converted into selenocysteinyl-tRNA(Sec). The polypeptide is Serine--tRNA ligase (Chlorobium phaeobacteroides (strain DSM 266 / SMG 266 / 2430)).